A 298-amino-acid chain; its full sequence is HTH-type transcriptional regulator TsaR (298 aa).

One can recognise an HTH lysR-type domain in the interval 1 to 58; that stretch reads MKLQTLQALICIEEVGSLRAAAQLLHLSQPALSAAIQQLEDELKAPLLVRTKRGVSLT. The segment at residues 18–37 is a DNA-binding region (H-T-H motif); sequence LRAAAQLLHLSQPALSAAIQ. Positions 98 and 100 each coordinate toluene-4-sulfonate.

This sequence belongs to the LysR transcriptional regulatory family. As to quaternary structure, homotetramer. Dimer of dimers related by a twofold axis.

Its activity is regulated as follows. Sensitive to oxygen. In terms of biological role, regulates expression of the tsaMBCD1 operon and of tsaT in response to p-toluenesulfonate (TSA). Acts by binding directly to the promoter region. Binding to the tsa promoter depends on TSA concentration. The chain is HTH-type transcriptional regulator TsaR (tsaR) from Comamonas testosteroni (Pseudomonas testosteroni).